Consider the following 71-residue polypeptide: Beta-defensin 10 (71 aa).

The signal sequence occupies residues 1 to 23 (MKTLCSLLLIGCLLFSYDTPVVG). Cystine bridges form between Cys-37/Cys-66, Cys-44/Cys-59, and Cys-49/Cys-67.

It belongs to the beta-defensin family.

The protein resides in the secreted. Has antibacterial activity. This Rattus norvegicus (Rat) protein is Beta-defensin 10 (Defb10).